A 459-amino-acid polypeptide reads, in one-letter code: Bifunctional protein GlmU (459 aa).

Positions 1-229 (MSNYAIILAA…FDESLGVNDR (229 aa)) are pyrophosphorylase. UDP-N-acetyl-alpha-D-glucosamine-binding positions include 8-11 (LAAG), K22, Q72, and 77-78 (GT). D102 contacts Mg(2+). UDP-N-acetyl-alpha-D-glucosamine contacts are provided by G139, E154, N169, and N227. N227 is a binding site for Mg(2+). The segment at 230 to 250 (VALATAEKVMRHRIARQHMVN) is linker. Residues 251-459 (GVTVVNPDSA…NKKPHHPSQK (209 aa)) form an N-acetyltransferase region. UDP-N-acetyl-alpha-D-glucosamine-binding residues include R332 and K350. Residue H362 is the Proton acceptor of the active site. UDP-N-acetyl-alpha-D-glucosamine is bound by residues Y365 and N376. Acetyl-CoA-binding positions include A379, 385–386 (NY), S404, A422, and R439.

In the N-terminal section; belongs to the N-acetylglucosamine-1-phosphate uridyltransferase family. This sequence in the C-terminal section; belongs to the transferase hexapeptide repeat family. In terms of assembly, homotrimer. The cofactor is Mg(2+).

Its subcellular location is the cytoplasm. The catalysed reaction is alpha-D-glucosamine 1-phosphate + acetyl-CoA = N-acetyl-alpha-D-glucosamine 1-phosphate + CoA + H(+). It carries out the reaction N-acetyl-alpha-D-glucosamine 1-phosphate + UTP + H(+) = UDP-N-acetyl-alpha-D-glucosamine + diphosphate. The protein operates within nucleotide-sugar biosynthesis; UDP-N-acetyl-alpha-D-glucosamine biosynthesis; N-acetyl-alpha-D-glucosamine 1-phosphate from alpha-D-glucosamine 6-phosphate (route II): step 2/2. Its pathway is nucleotide-sugar biosynthesis; UDP-N-acetyl-alpha-D-glucosamine biosynthesis; UDP-N-acetyl-alpha-D-glucosamine from N-acetyl-alpha-D-glucosamine 1-phosphate: step 1/1. It functions in the pathway bacterial outer membrane biogenesis; LPS lipid A biosynthesis. Its function is as follows. Catalyzes the last two sequential reactions in the de novo biosynthetic pathway for UDP-N-acetylglucosamine (UDP-GlcNAc). The C-terminal domain catalyzes the transfer of acetyl group from acetyl coenzyme A to glucosamine-1-phosphate (GlcN-1-P) to produce N-acetylglucosamine-1-phosphate (GlcNAc-1-P), which is converted into UDP-GlcNAc by the transfer of uridine 5-monophosphate (from uridine 5-triphosphate), a reaction catalyzed by the N-terminal domain. In Streptococcus agalactiae serotype III (strain NEM316), this protein is Bifunctional protein GlmU.